A 438-amino-acid chain; its full sequence is Histidine--tRNA ligase (438 aa).

It belongs to the class-II aminoacyl-tRNA synthetase family. As to quaternary structure, homodimer.

The protein resides in the cytoplasm. The catalysed reaction is tRNA(His) + L-histidine + ATP = L-histidyl-tRNA(His) + AMP + diphosphate + H(+). In Aromatoleum aromaticum (strain DSM 19018 / LMG 30748 / EbN1) (Azoarcus sp. (strain EbN1)), this protein is Histidine--tRNA ligase.